Consider the following 426-residue polypeptide: Enolase (426 aa).

Residue Gln-163 coordinates (2R)-2-phosphoglycerate. The Proton donor role is filled by Glu-205. Residues Asp-242, Glu-283, and Asp-310 each contribute to the Mg(2+) site. Lys-335, Arg-364, Ser-365, and Lys-386 together coordinate (2R)-2-phosphoglycerate. Lys-335 acts as the Proton acceptor in catalysis.

The protein belongs to the enolase family. It depends on Mg(2+) as a cofactor.

It is found in the cytoplasm. The protein resides in the secreted. Its subcellular location is the cell surface. It carries out the reaction (2R)-2-phosphoglycerate = phosphoenolpyruvate + H2O. It participates in carbohydrate degradation; glycolysis; pyruvate from D-glyceraldehyde 3-phosphate: step 4/5. In terms of biological role, catalyzes the reversible conversion of 2-phosphoglycerate (2-PG) into phosphoenolpyruvate (PEP). It is essential for the degradation of carbohydrates via glycolysis. This chain is Enolase, found in Pseudarthrobacter chlorophenolicus (strain ATCC 700700 / DSM 12829 / CIP 107037 / JCM 12360 / KCTC 9906 / NCIMB 13794 / A6) (Arthrobacter chlorophenolicus).